The sequence spans 360 residues: Protein RecA (360 aa).

66-73 (GPESSGKT) lines the ATP pocket. The segment at 330–360 (DAKAIEERENPEKVKQDKEVPVNKDASDEKK) is disordered.

This sequence belongs to the RecA family.

Its subcellular location is the cytoplasm. In terms of biological role, can catalyze the hydrolysis of ATP in the presence of single-stranded DNA, the ATP-dependent uptake of single-stranded DNA by duplex DNA, and the ATP-dependent hybridization of homologous single-stranded DNAs. It interacts with LexA causing its activation and leading to its autocatalytic cleavage. This chain is Protein RecA, found in Lactobacillus johnsonii (strain CNCM I-12250 / La1 / NCC 533).